Consider the following 440-residue polypeptide: Thymidine phosphorylase (440 aa).

It belongs to the thymidine/pyrimidine-nucleoside phosphorylase family. In terms of assembly, homodimer.

It carries out the reaction thymidine + phosphate = 2-deoxy-alpha-D-ribose 1-phosphate + thymine. It participates in pyrimidine metabolism; dTMP biosynthesis via salvage pathway; dTMP from thymine: step 1/2. In terms of biological role, the enzymes which catalyze the reversible phosphorolysis of pyrimidine nucleosides are involved in the degradation of these compounds and in their utilization as carbon and energy sources, or in the rescue of pyrimidine bases for nucleotide synthesis. The polypeptide is Thymidine phosphorylase (Escherichia coli O139:H28 (strain E24377A / ETEC)).